The sequence spans 316 residues: Transaldolase (316 aa).

The active-site Schiff-base intermediate with substrate is Lys-131.

The protein belongs to the transaldolase family. Type 1 subfamily. As to quaternary structure, homodimer.

It localises to the cytoplasm. It carries out the reaction D-sedoheptulose 7-phosphate + D-glyceraldehyde 3-phosphate = D-erythrose 4-phosphate + beta-D-fructose 6-phosphate. The protein operates within carbohydrate degradation; pentose phosphate pathway; D-glyceraldehyde 3-phosphate and beta-D-fructose 6-phosphate from D-ribose 5-phosphate and D-xylulose 5-phosphate (non-oxidative stage): step 2/3. Transaldolase is important for the balance of metabolites in the pentose-phosphate pathway. This chain is Transaldolase, found in Chromohalobacter salexigens (strain ATCC BAA-138 / DSM 3043 / CIP 106854 / NCIMB 13768 / 1H11).